Here is a 353-residue protein sequence, read N- to C-terminus: Photosystem II protein D1 (353 aa).

Thr2 carries the N-acetylthreonine modification. The residue at position 2 (Thr2) is a Phosphothreonine. Transmembrane regions (helical) follow at residues Tyr29–Ser46, His118–Leu133, and Trp142–Ala156. Chlorophyll a is bound at residue His118. Tyr126 is a pheophytin a binding site. Residues Asp170 and Glu189 each contribute to the [CaMn4O5] cluster site. Residues Phe197–Leu218 traverse the membrane as a helical segment. His198 is a binding site for chlorophyll a. Residues His215 and Ser264–Phe265 each bind a quinone. His215 contacts Fe cation. A Fe cation-binding site is contributed by His272. The helical transmembrane segment at Phe274–Leu288 threads the bilayer. [CaMn4O5] cluster contacts are provided by His332, Glu333, Asp342, and Ala344. Residues Ala345–Gly353 constitute a propeptide that is removed on maturation.

Belongs to the reaction center PufL/M/PsbA/D family. In terms of assembly, PSII is composed of 1 copy each of membrane proteins PsbA, PsbB, PsbC, PsbD, PsbE, PsbF, PsbH, PsbI, PsbJ, PsbK, PsbL, PsbM, PsbT, PsbX, PsbY, PsbZ, Psb30/Ycf12, at least 3 peripheral proteins of the oxygen-evolving complex and a large number of cofactors. It forms dimeric complexes. The D1/D2 heterodimer binds P680, chlorophylls that are the primary electron donor of PSII, and subsequent electron acceptors. It shares a non-heme iron and each subunit binds pheophytin, quinone, additional chlorophylls, carotenoids and lipids. D1 provides most of the ligands for the Mn4-Ca-O5 cluster of the oxygen-evolving complex (OEC). There is also a Cl(-1) ion associated with D1 and D2, which is required for oxygen evolution. The PSII complex binds additional chlorophylls, carotenoids and specific lipids. serves as cofactor. Post-translationally, tyr-161 forms a radical intermediate that is referred to as redox-active TyrZ, YZ or Y-Z. In terms of processing, C-terminally processed by CTPA; processing is essential to allow assembly of the oxygen-evolving complex and thus photosynthetic growth.

The protein localises to the plastid. It localises to the chloroplast thylakoid membrane. It catalyses the reaction 2 a plastoquinone + 4 hnu + 2 H2O = 2 a plastoquinol + O2. In terms of biological role, photosystem II (PSII) is a light-driven water:plastoquinone oxidoreductase that uses light energy to abstract electrons from H(2)O, generating O(2) and a proton gradient subsequently used for ATP formation. It consists of a core antenna complex that captures photons, and an electron transfer chain that converts photonic excitation into a charge separation. The D1/D2 (PsbA/PsbD) reaction center heterodimer binds P680, the primary electron donor of PSII as well as several subsequent electron acceptors. This is Photosystem II protein D1 from Marchantia polymorpha (Common liverwort).